The following is a 292-amino-acid chain: Elongation factor Ts (292 aa).

An involved in Mg(2+) ion dislocation from EF-Tu region spans residues 79–82 (TDFV).

The protein belongs to the EF-Ts family.

The protein resides in the cytoplasm. In terms of biological role, associates with the EF-Tu.GDP complex and induces the exchange of GDP to GTP. It remains bound to the aminoacyl-tRNA.EF-Tu.GTP complex up to the GTP hydrolysis stage on the ribosome. The chain is Elongation factor Ts from Metamycoplasma arthritidis (strain 158L3-1) (Mycoplasma arthritidis).